The following is a 325-amino-acid chain: Foldase protein PrsA (325 aa).

The N-terminal stretch at 1-20 (MKLMNKIIVPVTASALLLGA) is a signal peptide. A lipid anchor (N-palmitoyl cysteine) is attached at Cys-21. A lipid anchor (S-diacylglycerol cysteine) is attached at Cys-21. In terms of domain architecture, PpiC spans 139 to 245 (ENSKKTSHIL…YGYHIIKADK (107 aa)). 2 disordered regions span residues 159–200 (EGLS…SAKK) and 303–325 (PDKI…NSGS).

Belongs to the PrsA family.

The protein localises to the cell membrane. The catalysed reaction is [protein]-peptidylproline (omega=180) = [protein]-peptidylproline (omega=0). Its function is as follows. Plays a major role in protein secretion by helping the post-translocational extracellular folding of several secreted proteins. The chain is Foldase protein PrsA from Staphylococcus epidermidis (strain ATCC 35984 / DSM 28319 / BCRC 17069 / CCUG 31568 / BM 3577 / RP62A).